The following is a 541-amino-acid chain: Multidrug transporter protein MdtP (541 aa).

14 helical membrane passes run 14–34 (LLITGLIIAMFFSALDGTIVG), 40–60 (IVGDLGGLSMMTWLTTAYLLT), 79–99 (IVYVSGLIIFMAASALCGMAN), 112–132 (GIGGGIMMPMAMIVIGDLFTG), 141–161 (VFGAIYGLASVIGPQIGGWIV), 168–188 (WVFYINLPVGIIAVIFIARGL), 201–221 (IAGIFTMIVGVVSLLLALSFG), 229–249 (SWQILGLFALALIGIVSFIIV), 273–293 (LIGFFMSIGMFGAITFVPFFM), 307–327 (IMTPMMISMIITSIIGGQLVY), 329–349 (IGIKPQIITGMLVMAGGFLLL), 359–379 (LVATSFMAIIGLGMGLVMPIL), 401–420 (FFRSIGGTFGITMLGAVMNA), and 492–512 (LHSVFYTGLIFIAVGAVFTLF).

This sequence belongs to the major facilitator superfamily. EmrB family.

The protein localises to the cell membrane. Multidrug efflux transporter. Contributes to resistance to several antibiotics, including fusidic acid, novobiocin, streptomycin and actinomycin, possibly by pumping these structurally unrelated antibiotics out of cells. In Bacillus subtilis (strain 168), this protein is Multidrug transporter protein MdtP.